The chain runs to 458 residues: Vitamin K-dependent protein C (458 aa).

The N-terminal stretch at 1–27 (IPDDVGYRNQKTASKEGVCVVSKCQDG) is a signal peptide. The propeptide occupies 28–36 (PNTLPRAKR). One can recognise a Gla domain in the interval 37 to 82 (ANSFLEELRPSSLERECVEEVCDLEEAKEIFQSVDDTLAFWYKYVD). Residues E42, E43, E50, E52, E55, E56, E61, E62, and E65 each carry the 4-carboxyglutamate modification. A disulfide bridge links C53 with C58. Disulfide bonds link C86-C105, C95-C100, C99-C114, and C116-C125. EGF-like domains follow at residues 91–126 (SEHP…SFCQ) and 130–170 (RFSN…LQCE). (3R)-3-hydroxyaspartate is present on D107. An N-linked (GlcNAc...) asparagine glycan is attached at N133. 5 disulfides stabilise this stretch: C134–C145, C141–C154, C156–C169, C177–C316, and C235–C251. In terms of domain architecture, Peptidase S1 spans 210-447 (IDGKLTRRGD…YLDWIHSHIE (238 aa)). H250 serves as the catalytic Charge relay system. A glycan (N-linked (GlcNAc...) asparagine) is linked at N287. D296 (charge relay system) is an active-site residue. N-linked (GlcNAc...) asparagine glycosylation occurs at N352. 2 disulfides stabilise this stretch: C370–C384 and C395–C423. The Charge relay system role is filled by S399.

The protein belongs to the peptidase S1 family. Synthesized as a single chain precursor, which is cleaved into a light chain and a heavy chain held together by a disulfide bond. The enzyme is then activated by thrombin, which cleaves a tetradecapeptide from the amino end of the heavy chain; this reaction, which occurs at the surface of endothelial cells, is strongly promoted by thrombomodulin. In terms of processing, the vitamin K-dependent, enzymatic carboxylation of some Glu residues allows the modified protein to bind calcium. Post-translationally, the iron and 2-oxoglutarate dependent 3-hydroxylation of aspartate and asparagine is (R) stereospecific within EGF domains. As to expression, plasma; synthesized in the liver.

It is found in the secreted. Its subcellular location is the golgi apparatus. The protein resides in the endoplasmic reticulum. It catalyses the reaction Degradation of blood coagulation factors Va and VIIIa.. Functionally, protein C is a vitamin K-dependent serine protease that regulates blood coagulation by inactivating factors Va and VIIIa in the presence of calcium ions and phospholipids. Exerts a protective effect on the endothelial cell barrier function. This Oryctolagus cuniculus (Rabbit) protein is Vitamin K-dependent protein C (PROC).